A 493-amino-acid chain; its full sequence is Ketol-acid reductoisomerase (NADP(+)) (493 aa).

The region spanning 17-208 (LSQCRFMDRS…GGDRAGVLHS (192 aa)) is the KARI N-terminal Rossmann domain. NADP(+) is bound by residues 45-48 (CGAQ), arginine 68, arginine 76, serine 78, and 108-110 (DKQ). Residue histidine 132 is part of the active site. Glycine 158 serves as a coordination point for NADP(+). 2 consecutive KARI C-terminal knotted domains span residues 209 to 344 (SFIA…NAPS) and 345 to 486 (SNEH…MKDM). 4 residues coordinate Mg(2+): aspartate 217, glutamate 221, glutamate 389, and glutamate 393. Serine 414 serves as a coordination point for substrate.

The protein belongs to the ketol-acid reductoisomerase family. It depends on Mg(2+) as a cofactor.

It catalyses the reaction (2R)-2,3-dihydroxy-3-methylbutanoate + NADP(+) = (2S)-2-acetolactate + NADPH + H(+). It carries out the reaction (2R,3R)-2,3-dihydroxy-3-methylpentanoate + NADP(+) = (S)-2-ethyl-2-hydroxy-3-oxobutanoate + NADPH + H(+). The protein operates within amino-acid biosynthesis; L-isoleucine biosynthesis; L-isoleucine from 2-oxobutanoate: step 2/4. It functions in the pathway amino-acid biosynthesis; L-valine biosynthesis; L-valine from pyruvate: step 2/4. Its function is as follows. Involved in the biosynthesis of branched-chain amino acids (BCAA). Catalyzes an alkyl-migration followed by a ketol-acid reduction of (S)-2-acetolactate (S2AL) to yield (R)-2,3-dihydroxy-isovalerate. In the isomerase reaction, S2AL is rearranged via a Mg-dependent methyl migration to produce 3-hydroxy-3-methyl-2-ketobutyrate (HMKB). In the reductase reaction, this 2-ketoacid undergoes a metal-dependent reduction by NADPH to yield (R)-2,3-dihydroxy-isovalerate. In Shewanella amazonensis (strain ATCC BAA-1098 / SB2B), this protein is Ketol-acid reductoisomerase (NADP(+)).